Reading from the N-terminus, the 212-residue chain is Chloramphenicol acetyltransferase (212 aa).

His186 acts as the Proton acceptor in catalysis.

Belongs to the chloramphenicol acetyltransferase family. In terms of assembly, homotrimer.

The catalysed reaction is chloramphenicol + acetyl-CoA = chloramphenicol 3-acetate + CoA. In terms of biological role, this enzyme is an effector of chloramphenicol resistance in bacteria. This is Chloramphenicol acetyltransferase (catD) from Clostridioides difficile (Peptoclostridium difficile).